The following is a 429-amino-acid chain: Serine hydroxymethyltransferase (429 aa).

Residues Leu126 and 130–132 (GHL) each bind (6S)-5,6,7,8-tetrahydrofolate. At Lys235 the chain carries N6-(pyridoxal phosphate)lysine. 359–361 (SPF) is a (6S)-5,6,7,8-tetrahydrofolate binding site.

Belongs to the SHMT family. As to quaternary structure, homodimer. The cofactor is pyridoxal 5'-phosphate.

The protein resides in the cytoplasm. It carries out the reaction (6R)-5,10-methylene-5,6,7,8-tetrahydrofolate + glycine + H2O = (6S)-5,6,7,8-tetrahydrofolate + L-serine. Its pathway is one-carbon metabolism; tetrahydrofolate interconversion. It participates in amino-acid biosynthesis; glycine biosynthesis; glycine from L-serine: step 1/1. Functionally, catalyzes the reversible interconversion of serine and glycine with tetrahydrofolate (THF) serving as the one-carbon carrier. This reaction serves as the major source of one-carbon groups required for the biosynthesis of purines, thymidylate, methionine, and other important biomolecules. Also exhibits THF-independent aldolase activity toward beta-hydroxyamino acids, producing glycine and aldehydes, via a retro-aldol mechanism. The polypeptide is Serine hydroxymethyltransferase (Synechococcus sp. (strain CC9902)).